The following is a 273-amino-acid chain: Putative phosphoenolpyruvate synthase regulatory protein (273 aa).

154–161 contacts ADP; the sequence is GVSRSGKT.

It belongs to the pyruvate, phosphate/water dikinase regulatory protein family. PSRP subfamily.

The enzyme catalyses [pyruvate, water dikinase] + ADP = [pyruvate, water dikinase]-phosphate + AMP + H(+). The catalysed reaction is [pyruvate, water dikinase]-phosphate + phosphate + H(+) = [pyruvate, water dikinase] + diphosphate. Functionally, bifunctional serine/threonine kinase and phosphorylase involved in the regulation of the phosphoenolpyruvate synthase (PEPS) by catalyzing its phosphorylation/dephosphorylation. This chain is Putative phosphoenolpyruvate synthase regulatory protein, found in Neisseria gonorrhoeae (strain ATCC 700825 / FA 1090).